The sequence spans 188 residues: Probable nicotinate-nucleotide adenylyltransferase (188 aa).

The protein belongs to the NadD family.

It carries out the reaction nicotinate beta-D-ribonucleotide + ATP + H(+) = deamido-NAD(+) + diphosphate. Its pathway is cofactor biosynthesis; NAD(+) biosynthesis; deamido-NAD(+) from nicotinate D-ribonucleotide: step 1/1. Functionally, catalyzes the reversible adenylation of nicotinate mononucleotide (NaMN) to nicotinic acid adenine dinucleotide (NaAD). The polypeptide is Probable nicotinate-nucleotide adenylyltransferase (Listeria monocytogenes serotype 4a (strain HCC23)).